Here is a 400-residue protein sequence, read N- to C-terminus: Tryptophan--tRNA ligase, cytoplasmic (400 aa).

The 'HIGH' region signature appears at Pro95–His104. A 'KMSKS' region motif is present at residues Lys281–Ser285.

This sequence belongs to the class-I aminoacyl-tRNA synthetase family.

The protein localises to the cytoplasm. It catalyses the reaction tRNA(Trp) + L-tryptophan + ATP = L-tryptophyl-tRNA(Trp) + AMP + diphosphate + H(+). The polypeptide is Tryptophan--tRNA ligase, cytoplasmic (trpS) (Dictyostelium discoideum (Social amoeba)).